Consider the following 230-residue polypeptide: MKITWMGHGSFRIEIADQVLLIDPWITGNPVFPADRRDAALAGATHILITHGHGDHTADAVALSKELGAPIVGIYDLMSYWAETEGVETVGFNKGGTVMLGDVAVTMVNAVHSSSLGTDHGPMYAGAEAGFMIKGEGRTVYVSGDTDVMADMKVFNDLHQPEIGILASGGHFTMDMERAAYAARTFFDFKTVIPCHYKTFPLLAQSAQPLIDGLPGTDVRTPEVMETIEL.

The protein belongs to the UPF0173 family.

The sequence is that of UPF0173 metal-dependent hydrolase Dshi_2788 from Dinoroseobacter shibae (strain DSM 16493 / NCIMB 14021 / DFL 12).